Here is an 86-residue protein sequence, read N- to C-terminus: Mu-theraphotoxin-Hhn1c (86 aa).

The N-terminal stretch at 1–21 is a signal peptide; it reads MKASMFLALAGLALLFVVCYA. Residues 22–49 constitute a propeptide that is removed on maturation; it reads SESEEKEFSNELLSSVLAVDDNSKGEER. Cystine bridges form between cysteine 51-cysteine 66, cysteine 58-cysteine 73, and cysteine 65-cysteine 80. Residue isoleucine 84 is modified to Isoleucine amide.

This sequence belongs to the neurotoxin 10 (Hwtx-1) family. 22 (Htx-4) subfamily. As to quaternary structure, monomer. As to expression, expressed by the venom gland.

The protein localises to the secreted. Functionally, neurotoxin. Selectively blocks neuronal tetrodotoxin-sensitive voltage-gated sodium channels (Nav). Does not affect tetrodotoxin-resistant voltage-gated sodium channels or calcium channels. The sequence is that of Mu-theraphotoxin-Hhn1c from Cyriopagopus hainanus (Chinese bird spider).